A 326-amino-acid polypeptide reads, in one-letter code: H-2 class I histocompatibility antigen, Q8 alpha chain (326 aa).

The first 21 residues, 1 to 21 (MALTMLLLLVAAALTLIETRA), serve as a signal peptide directing secretion. An alpha-1 region spans residues 22–111 (GPHSLRYFHT…AQRYYNQSKG (90 aa)). The Extracellular portion of the chain corresponds to 22 to 305 (GPHSLRYFHT…EPPPSTVSNM (284 aa)). Asparagine 107 carries N-linked (GlcNAc...) asparagine glycosylation. The tract at residues 112 to 203 (GSHTLQWMYG…QLRKETLLCT (92 aa)) is alpha-2. Cystine bridges form between cysteine 122–cysteine 185 and cysteine 224–cysteine 280. Positions 204 to 295 (DPPKAHVTHH…GLPEPLTLRW (92 aa)) are alpha-3. An Ig-like C1-type domain is found at 206 to 294 (PKAHVTHHPR…EGLPEPLTLR (89 aa)). Asparagine 277 carries an N-linked (GlcNAc...) asparagine glycan. Positions 296 to 305 (EPPPSTVSNM) are connecting peptide. Residues 306–326 (ANVAILVVLVAWPSLELWWIL) form a helical membrane-spanning segment.

This sequence belongs to the MHC class I family. In terms of assembly, heterodimer of an alpha chain and a beta chain (beta-2-microglobulin).

The protein resides in the membrane. Functionally, involved in the presentation of foreign antigens to the immune system. This is H-2 class I histocompatibility antigen, Q8 alpha chain (H2-Q8) from Mus musculus (Mouse).